We begin with the raw amino-acid sequence, 150 residues long: Bis(5'-adenosyl)-triphosphatase (150 aa).

The 108-residue stretch at 2–109 folds into the HIT domain; the sequence is SFRFGQHLIK…LPRKAGDFPR (108 aa). Residues histidine 8, asparagine 27, glutamine 83, and 89–92 contribute to the substrate site; that span reads GQTV. The Histidine triad motif signature appears at 94–98; the sequence is HVHVH. Histidine 96 serves as the catalytic Tele-AMP-histidine intermediate. Histidine 98 lines the substrate pocket. Tyrosine 114 carries the post-translational modification Phosphotyrosine; by SRC. Residue tyrosine 147 is modified to Phosphotyrosine.

As to quaternary structure, homodimer. Interacts with UBE2I. Interacts with MDM2. Interacts with CTNNB1. Identified in a complex with CTNNB1 and LEF1. Phosphorylation at Tyr-114 by SRC is required for induction of apoptosis. In terms of tissue distribution, expressed in heart, brain, lung and skeletal muscle. Particularly strong expression in liver, testis and kidney, where it is confined to the tubular epithelium.

The protein localises to the cytoplasm. Its subcellular location is the nucleus. It localises to the mitochondrion. It catalyses the reaction P(1),P(3)-bis(5'-adenosyl) triphosphate + H2O = AMP + ADP + 2 H(+). The catalysed reaction is adenosine 5'-phosphosulfate + H2O = sulfate + AMP + 2 H(+). The enzyme catalyses adenosine 5'-phosphosulfate + NH4(+) = adenosine 5'-phosphoramidate + sulfate + 2 H(+). It carries out the reaction adenosine 5'-phosphoramidate + H2O = AMP + NH4(+). Functionally, possesses dinucleoside triphosphate hydrolase activity. Cleaves P(1)-P(3)-bis(5'-adenosyl) triphosphate (Ap3A) to yield AMP and ADP. Can also hydrolyze P(1)-P(4)-bis(5'-adenosyl) tetraphosphate (Ap4A), but has extremely low activity with ATP. Exhibits adenylylsulfatase activity, hydrolyzing adenosine 5'-phosphosulfate to yield AMP and sulfate. Exhibits adenosine 5'-monophosphoramidase activity, hydrolyzing purine nucleotide phosphoramidates with a single phosphate group such as adenosine 5'monophosphoramidate (AMP-NH2) to yield AMP and NH2. Exhibits adenylylsulfate-ammonia adenylyltransferase, catalyzing the ammonolysis of adenosine 5'-phosphosulfate resulting in the formation of adenosine 5'-phosphoramidate. Also catalyzes the ammonolysis of adenosine 5-phosphorofluoridate and diadenosine triphosphate. Modulates transcriptional activation by CTNNB1 and thereby contributes to regulate the expression of genes essential for cell proliferation and survival, such as CCND1 and BIRC5. Plays a role in the induction of apoptosis via SRC and AKT1 signaling pathways. Inhibits MDM2-mediated proteasomal degradation of p53/TP53 and thereby plays a role in p53/TP53-mediated apoptosis. Induction of apoptosis depends on the ability of FHIT to bind P(1)-P(3)-bis(5'-adenosyl) triphosphate or related compounds, but does not require its catalytic activity. Functions as a tumor suppressor. This chain is Bis(5'-adenosyl)-triphosphatase (Fhit), found in Mus musculus (Mouse).